A 270-amino-acid polypeptide reads, in one-letter code: Glutamate racemase (270 aa).

Substrate contacts are provided by residues 14–15 (DS) and 46–47 (YG). The Proton donor/acceptor role is filled by C77. 78 to 79 (NT) lines the substrate pocket. The Proton donor/acceptor role is filled by C189. 190-191 (TH) lines the substrate pocket.

Belongs to the aspartate/glutamate racemases family.

The enzyme catalyses L-glutamate = D-glutamate. It participates in cell wall biogenesis; peptidoglycan biosynthesis. Provides the (R)-glutamate required for cell wall biosynthesis. This is Glutamate racemase from Neisseria meningitidis serogroup C.